The chain runs to 282 residues: tRNA uridine(34) hydroxylase (282 aa).

Residues 128-222 (EGRPVVMLDT…YFEEVGGDHY (95 aa)) form the Rhodanese domain. Catalysis depends on C182, which acts as the Cysteine persulfide intermediate.

This sequence belongs to the TrhO family.

It catalyses the reaction uridine(34) in tRNA + AH2 + O2 = 5-hydroxyuridine(34) in tRNA + A + H2O. In terms of biological role, catalyzes oxygen-dependent 5-hydroxyuridine (ho5U) modification at position 34 in tRNAs. In Cupriavidus pinatubonensis (strain JMP 134 / LMG 1197) (Cupriavidus necator (strain JMP 134)), this protein is tRNA uridine(34) hydroxylase.